Reading from the N-terminus, the 407-residue chain is L-amino-acid oxidase (407 aa).

A disulfide bond links Cys10 and Cys94. Asn93 carries N-linked (GlcNAc...) asparagine glycosylation. Substrate is bound at residue His144. Val182 is a binding site for FAD. Cys252 and Cys333 are joined by a disulfide. Residue Asn282 is glycosylated (N-linked (GlcNAc...) asparagine). A substrate-binding site is contributed by Tyr293. FAD is bound by residues Glu378 and Gly385–Thr390. Position 385 to 386 (Gly385 to Trp386) interacts with substrate.

It belongs to the flavin monoamine oxidase family. FIG1 subfamily. In terms of assembly, homodimer; non-covalently linked. It depends on FAD as a cofactor. In terms of tissue distribution, expressed by the venom gland.

It localises to the secreted. The catalysed reaction is an L-alpha-amino acid + O2 + H2O = a 2-oxocarboxylate + H2O2 + NH4(+). It carries out the reaction L-leucine + O2 + H2O = 4-methyl-2-oxopentanoate + H2O2 + NH4(+). The enzyme catalyses L-phenylalanine + O2 + H2O = 3-phenylpyruvate + H2O2 + NH4(+). It catalyses the reaction L-isoleucine + O2 + H2O = (S)-3-methyl-2-oxopentanoate + H2O2 + NH4(+). The catalysed reaction is L-aspartate + O2 + H2O = oxaloacetate + H2O2 + NH4(+). It carries out the reaction L-lysine + O2 + H2O = 6-amino-2-oxohexanoate + H2O2 + NH4(+). The enzyme catalyses L-glutamate + O2 + H2O = H2O2 + 2-oxoglutarate + NH4(+). In terms of biological role, catalyzes an oxidative deamination of predominantly hydrophobic and aromatic L-amino acids, thus producing hydrogen peroxide that may contribute to the diverse toxic effects of this enzyme. Is highly active on L-Leu followed by L-Phe and L-Ile, moderately active on L-Asp, L-Glu, and L-Lys, and not active on L-Pro, L-Asn, L-Gly, L-Ser and L-Cys. Exhibits diverse biological activities such as antibacterial activity (Minimal inhibitory concentrations (MIC) are 9.0 ug/ml against S.aureus, 144.0 ug/ml against P.aeruginosa and 288.0 ug/ml against E.coli) and inhibition of ADP- and TMVA-induced platelet aggregation. Effects of snake L-amino oxidases on platelets are controversial, since they either induce aggregation or inhibit agonist-induced aggregation. These different effects are probably due to different experimental conditions. Unlike other snake venom L-amino acid oxidases, does not induce hemorrhage. This protein may also induce hemolysis, edema, apoptosis and have antiparasitic activities. This chain is L-amino-acid oxidase, found in Daboia siamensis (Eastern Russel's viper).